Consider the following 211-residue polypeptide: Dephospho-CoA kinase (211 aa).

Positions 3 to 206 (VLGLTGGIGS…PGMKGPDPHA (204 aa)) constitute a DPCK domain. Residue 11–16 (GSGKSI) participates in ATP binding.

Belongs to the CoaE family.

The protein localises to the cytoplasm. The catalysed reaction is 3'-dephospho-CoA + ATP = ADP + CoA + H(+). It participates in cofactor biosynthesis; coenzyme A biosynthesis; CoA from (R)-pantothenate: step 5/5. Catalyzes the phosphorylation of the 3'-hydroxyl group of dephosphocoenzyme A to form coenzyme A. The chain is Dephospho-CoA kinase from Syntrophotalea carbinolica (strain DSM 2380 / NBRC 103641 / GraBd1) (Pelobacter carbinolicus).